The primary structure comprises 156 residues: Ribonuclease H (156 aa).

The RNase H type-1 domain occupies 3-144; sequence ERKLIHIFTD…CDILARSAAE (142 aa). Residues aspartate 12, glutamate 50, aspartate 72, and aspartate 136 each coordinate Mg(2+).

Belongs to the RNase H family. Monomer. The cofactor is Mg(2+).

Its subcellular location is the cytoplasm. It carries out the reaction Endonucleolytic cleavage to 5'-phosphomonoester.. In terms of biological role, endonuclease that specifically degrades the RNA of RNA-DNA hybrids. In Shewanella putrefaciens (strain CN-32 / ATCC BAA-453), this protein is Ribonuclease H.